A 492-amino-acid polypeptide reads, in one-letter code: Ferruginol synthase (492 aa).

The chain crosses the membrane as a helical span at residues methionine 1–phenylalanine 21. Cysteine 436 contacts heme.

The protein belongs to the cytochrome P450 family. It depends on heme as a cofactor. Expressed in leaf glandular trichomes.

It localises to the membrane. The enzyme catalyses abieta-8,11,13-triene + reduced [NADPH--hemoprotein reductase] + O2 = ferruginol + oxidized [NADPH--hemoprotein reductase] + H2O + H(+). The catalysed reaction is ferruginol + reduced [NADPH--hemoprotein reductase] + O2 = 11-hydroxyferruginol + oxidized [NADPH--hemoprotein reductase] + H2O + H(+). It carries out the reaction miltiradiene + 2 reduced [NADPH--hemoprotein reductase] + 2 O2 = 11-oxomiltiradiene + 2 oxidized [NADPH--hemoprotein reductase] + 3 H2O + 2 H(+). Its pathway is secondary metabolite biosynthesis; terpenoid biosynthesis. Monooxygenase involved in the biosynthesis of labdane-related diterpenes natural products. Catalyzes the oxidation of abietatriene to produce ferruginol. Catalyzes the oxidation of ferruginol at C-12 to produce 11-hydroxyferruginol. Ferruginol and 11-hydroxyferruginol are intermediates in the biosynthesis of carnosate, a potent antioxidant. May also convert miltiradiene into 11-oxomiltiradiene. The chain is Ferruginol synthase from Salvia fruticosa (Greek sage).